We begin with the raw amino-acid sequence, 418 residues long: L-methionine/branched-chain amino acid exporter YjeH (418 aa).

Topologically, residues Met1–Gly15 are periplasmic. A helical membrane pass occupies residues Leu16 to Val36. Topologically, residues Ala37–Ser41 are cytoplasmic. A helical transmembrane segment spans residues Leu42 to Leu62. Over Gly63 to Gly89 the chain is Periplasmic. The helical transmembrane segment at Trp90–Phe110 threads the bilayer. The Cytoplasmic segment spans residues Gly111 to Ala113. Residues Met114–Trp134 form a helical membrane-spanning segment. Over Tyr135–Leu147 the chain is Periplasmic. A helical membrane pass occupies residues Gln148–Ile168. Residues Lys169–Glu182 are Cytoplasmic-facing. A helical membrane pass occupies residues Leu183 to Phe203. Residues Ala204–Arg219 lie on the Periplasmic side of the membrane. A helical transmembrane segment spans residues Ala220–Leu240. Topologically, residues His241–Lys257 are cytoplasmic. A helical membrane pass occupies residues Ile258–Ala278. At Cys279 to Asn317 the chain is on the periplasmic side. Residues Ala318–Ile338 form a helical membrane-spanning segment. Residues Asn339–Asp341 lie on the Cytoplasmic side of the membrane. The helical transmembrane segment at Ala342–Gly362 threads the bilayer. The Periplasmic portion of the chain corresponds to Cys363–Gly378. The helical transmembrane segment at Leu379–Leu399 threads the bilayer. Topologically, residues Ala400–Thr418 are cytoplasmic.

It belongs to the amino acid-polyamine-organocation (APC) superfamily. Amino acid efflux (AAE) (TC 2.A.3.13) family.

Its subcellular location is the cell inner membrane. The enzyme catalyses L-methionine(in) + H(+)(out) = L-methionine(out) + H(+)(in). The catalysed reaction is L-leucine(in) + H(+)(out) = L-leucine(out) + H(+)(in). It carries out the reaction L-isoleucine(in) + H(+)(out) = L-isoleucine(out) + H(+)(in). It catalyses the reaction L-valine(in) + H(+)(out) = L-valine(out) + H(+)(in). With respect to regulation, efflux of L-methionine is inhibited by the proton ionophore carbonyl cyanide m-chlorophenylhydrazone (CCCP). In terms of biological role, catalyzes the efflux of L-methionine, L-leucine, L-isoleucine and L-valine. Activity is dependent on electrochemical potential. This is L-methionine/branched-chain amino acid exporter YjeH (yjeH) from Escherichia coli (strain K12).